The following is a 287-amino-acid chain: Bifunctional protein FolD (287 aa).

Residues 171-173 (GHS), isoleucine 196, and isoleucine 237 contribute to the NADP(+) site.

This sequence belongs to the tetrahydrofolate dehydrogenase/cyclohydrolase family. Homodimer.

It carries out the reaction (6R)-5,10-methylene-5,6,7,8-tetrahydrofolate + NADP(+) = (6R)-5,10-methenyltetrahydrofolate + NADPH. The catalysed reaction is (6R)-5,10-methenyltetrahydrofolate + H2O = (6R)-10-formyltetrahydrofolate + H(+). It participates in one-carbon metabolism; tetrahydrofolate interconversion. Its function is as follows. Catalyzes the oxidation of 5,10-methylenetetrahydrofolate to 5,10-methenyltetrahydrofolate and then the hydrolysis of 5,10-methenyltetrahydrofolate to 10-formyltetrahydrofolate. This chain is Bifunctional protein FolD, found in Methanosarcina mazei (strain ATCC BAA-159 / DSM 3647 / Goe1 / Go1 / JCM 11833 / OCM 88) (Methanosarcina frisia).